The following is a 350-amino-acid chain: MPVLHNRISNDALKAKMLAESEPRTTISFYKYFHIADPKATRDALYQLFTALDVFGRVYLAHEGINAQISVPASNVETFRAQLYAFDPALEGLRLNIALDDDGKSFWVLRMKVRDRIVADGIDDPHFDASNVGEYLQAAEVNAMLDDPDALFIDMRNHYEYEVGHFENALEIPADTFREQLPKAVEMMQAHKDKKIVMYCTGGIRCEKASAWMKHNGFNKVWHIEGGIIEYARKAREQGLPVRFIGKNFVFDERMGERISDEIIAHCHQCGAPCDSHTNCKNDGCHLLFIQCPVCAEKYKGCCSEICCEESALPPEEQRRRRAGRENGNKIFNKSRGRLNTTLGIPDPTE.

Positions 146–240 constitute a Rhodanese domain; that stretch reads DDPDALFIDM…YARKAREQGL (95 aa). Cysteine 200 (cysteine persulfide intermediate) is an active-site residue.

The protein belongs to the TrhO family.

It catalyses the reaction uridine(34) in tRNA + AH2 + O2 = 5-hydroxyuridine(34) in tRNA + A + H2O. Catalyzes oxygen-dependent 5-hydroxyuridine (ho5U) modification at position 34 in tRNAs, the first step in 5-carboxymethoxyuridine (cmo5U) biosynthesis. May be part of an alternate pathway, which is able to bypass cmo5U biogenesis in a subset of tRNAs under aerobic conditions. The protein is tRNA uridine(34) hydroxylase of Escherichia coli O17:K52:H18 (strain UMN026 / ExPEC).